Here is a 132-residue protein sequence, read N- to C-terminus: Evasin P985 (132 aa).

A signal peptide spans methionine 1–threonine 24. Asparagine 45, asparagine 69, asparagine 74, asparagine 103, asparagine 111, and asparagine 117 each carry an N-linked (GlcNAc...) asparagine glycan. Disulfide bonds link cysteine 48-cysteine 70, cysteine 66-cysteine 109, cysteine 83-cysteine 114, and cysteine 104-cysteine 123.

It localises to the secreted. In terms of biological role, salivary chemokine-binding protein which binds to host chemokine CCL5. The sequence is that of Evasin P985 from Amblyomma parvum (South American tick).